We begin with the raw amino-acid sequence, 108 residues long: uncharacterized protein (108 aa).

Transmembrane regions (helical) follow at residues 26–46 (GAVY…ALII), 54–74 (LMTL…PLIF), and 84–104 (INYQ…CIYM).

The protein localises to the cell membrane. This is an uncharacterized protein from Methanocaldococcus jannaschii (strain ATCC 43067 / DSM 2661 / JAL-1 / JCM 10045 / NBRC 100440) (Methanococcus jannaschii).